The chain runs to 64 residues: MKVNDRVTVKTDGGPRRPGVVLAVEEFSEGTMYLVSLEDYPLGIWFFNESGHQDGIFVEKAEQD.

Belongs to the DsrB family.

In Salmonella enteritidis PT4 (strain P125109), this protein is Protein DsrB.